The following is a 178-amino-acid chain: ATP-dependent protease subunit HslV (178 aa).

Threonine 2 is an active-site residue. Residues serine 159, cysteine 162, and threonine 165 each coordinate Na(+).

Belongs to the peptidase T1B family. HslV subfamily. A double ring-shaped homohexamer of HslV is capped on each side by a ring-shaped HslU homohexamer. The assembly of the HslU/HslV complex is dependent on binding of ATP.

The protein resides in the cytoplasm. It carries out the reaction ATP-dependent cleavage of peptide bonds with broad specificity.. Its activity is regulated as follows. Allosterically activated by HslU binding. Protease subunit of a proteasome-like degradation complex believed to be a general protein degrading machinery. The protein is ATP-dependent protease subunit HslV of Buchnera aphidicola subsp. Cinara cedri (strain Cc).